Here is a 491-residue protein sequence, read N- to C-terminus: Ketol-acid reductoisomerase (NADP(+)) (491 aa).

Residues 15–208 (AQLGKCRFMG…GGHRAGVLES (194 aa)) form the KARI N-terminal Rossmann domain. NADP(+)-binding positions include 45-48 (CGAQ), Arg68, Arg76, Ser78, and 108-110 (DKQ). His132 is a catalytic residue. Gly158 lines the NADP(+) pocket. KARI C-terminal knotted domains are found at residues 209 to 344 (SFVA…TAPQ) and 345 to 484 (FEGK…MTDM). Positions 217, 221, 389, and 393 each coordinate Mg(2+). Ser414 lines the substrate pocket.

This sequence belongs to the ketol-acid reductoisomerase family. Mg(2+) is required as a cofactor.

It catalyses the reaction (2R)-2,3-dihydroxy-3-methylbutanoate + NADP(+) = (2S)-2-acetolactate + NADPH + H(+). The enzyme catalyses (2R,3R)-2,3-dihydroxy-3-methylpentanoate + NADP(+) = (S)-2-ethyl-2-hydroxy-3-oxobutanoate + NADPH + H(+). It functions in the pathway amino-acid biosynthesis; L-isoleucine biosynthesis; L-isoleucine from 2-oxobutanoate: step 2/4. The protein operates within amino-acid biosynthesis; L-valine biosynthesis; L-valine from pyruvate: step 2/4. In terms of biological role, involved in the biosynthesis of branched-chain amino acids (BCAA). Catalyzes an alkyl-migration followed by a ketol-acid reduction of (S)-2-acetolactate (S2AL) to yield (R)-2,3-dihydroxy-isovalerate. In the isomerase reaction, S2AL is rearranged via a Mg-dependent methyl migration to produce 3-hydroxy-3-methyl-2-ketobutyrate (HMKB). In the reductase reaction, this 2-ketoacid undergoes a metal-dependent reduction by NADPH to yield (R)-2,3-dihydroxy-isovalerate. This is Ketol-acid reductoisomerase (NADP(+)) from Salmonella dublin (strain CT_02021853).